Here is a 481-residue protein sequence, read N- to C-terminus: Protein hedgehog (481 aa).

Cys-93 carries N-palmitoyl cysteine lipidation. The Ca(2+) site is built by Glu-157, Glu-158, Asp-163, Thr-193, Glu-194, Asp-197, and Asp-199. A lipid anchor (Cholesterol glycine ester) is attached at Gly-265.

Belongs to the hedgehog family. As to quaternary structure, interacts with shf. In terms of processing, the C-terminal part of the hedgehog protein precursor displays an autoproteolysis activity that results in the cleavage of the full-length protein into two parts (N-product and C-product). In addition, the C-terminal part displays a cholesterol transferase activity that results by the covalent attachment of a cholesterol moiety to the C-terminal of the newly generated N-product. The N-product is the active species in both local and long-range signaling, whereas the C-product has no signaling activity. Cholesterylation is required for N-product targeting to lipid rafts and multimerization. Post-translationally, N-palmitoylation by Rasp of the hedgehog N-product, within the secretory pathway, is required for the embryonic and larval patterning activities of the hedgehog signal.

Its subcellular location is the nucleus. It is found in the cytoplasm. The protein resides in the cell membrane. It catalyses the reaction glycyl-L-cysteinyl-[protein] + cholesterol + H(+) = [protein]-C-terminal glycyl cholesterol ester + N-terminal L-cysteinyl-[protein]. Its function is as follows. The C-terminal part of the hedgehog protein precursor displays an autoproteolysis activity that results in the cleavage of the full-length protein into two parts (N-product and C-product). In addition, the C-terminal part displays a cholesterol transferase activity that results by the covalent attachment of a cholesterol moiety to the C-terminal of the newly generated N-product. Once cleaved, the C-product has no signaling activity and diffuses from the cell. Functionally, the dually lipidated hedgehog protein N-product is a morphogen which is essential for a variety of patterning events during development. Establishes the anterior-posterior axis of the embryonic segments and patterns the larval imaginal disks. Binds to the patched (ptc) receptor, which functions in association with smoothened (smo), to activate the transcription of target genes wingless (wg), decapentaplegic (dpp) and ptc. In the absence of hh, ptc represses the constitutive signaling activity of smo through fused (fu). Essential component of a signaling pathway which regulates the Duox-dependent gut immune response to bacterial uracil; required to activate Cad99C-dependent endosome formation, norpA-dependent Ca2+ mobilization and p38 MAPK, which are essential steps in the Duox-dependent production of reactive oxygen species (ROS) in response to intestinal bacterial infection. During photoreceptor differentiation, it up-regulates transcription of Ubr3, which in turn promotes the hh-signaling pathway by mediating the ubiquitination and degradation of cos. This Drosophila persimilis (Fruit fly) protein is Protein hedgehog.